The following is a 273-amino-acid chain: Putative phosphoenolpyruvate synthase regulatory protein (273 aa).

An ADP-binding site is contributed by 153-160 (AVSRAGKT).

Belongs to the pyruvate, phosphate/water dikinase regulatory protein family. PSRP subfamily.

The catalysed reaction is [pyruvate, water dikinase] + ADP = [pyruvate, water dikinase]-phosphate + AMP + H(+). The enzyme catalyses [pyruvate, water dikinase]-phosphate + phosphate + H(+) = [pyruvate, water dikinase] + diphosphate. Its function is as follows. Bifunctional serine/threonine kinase and phosphorylase involved in the regulation of the phosphoenolpyruvate synthase (PEPS) by catalyzing its phosphorylation/dephosphorylation. The protein is Putative phosphoenolpyruvate synthase regulatory protein of Xylella fastidiosa (strain M23).